The following is a 423-amino-acid chain: uncharacterized protein (423 aa).

The disordered stretch occupies residues 383 to 423 (ARGTTGGGGTRSGTSTDGQEDGRKPPVVVIREQPPPGNPPR).

The protein belongs to the mycobacterial PPE family.

This is an uncharacterized protein from Mycobacterium tuberculosis (strain CDC 1551 / Oshkosh).